The sequence spans 22 residues: Unknown endosperm protein L (22 aa).

The span at 1-11 (MRHSNKIRDEE) shows a compositional bias: basic and acidic residues. Positions 1–22 (MRHSNKIRDEEMVNNTRLNXXA) are disordered. Over residues 13-22 (VNNTRLNXXA) the composition is skewed to polar residues.

The N-terminus is blocked.

In Hordeum vulgare (Barley), this protein is Unknown endosperm protein L.